Consider the following 287-residue polypeptide: Inorganic pyrophosphatase (287 aa).

Arg80 contributes to the diphosphate binding site. Positions 117, 122, and 154 each coordinate Mg(2+).

It belongs to the PPase family. Mg(2+) serves as cofactor.

It is found in the cytoplasm. The enzyme catalyses diphosphate + H2O = 2 phosphate + H(+). The sequence is that of Inorganic pyrophosphatase (IPP1) from Yarrowia lipolytica (strain CLIB 122 / E 150) (Yeast).